Consider the following 89-residue polypeptide: Pigment dispersing factor homolog pdf-2 (89 aa).

The signal sequence occupies residues 1-27 (MSSRISVSLLLLAVVATMFFTANVVDA).

In terms of biological role, probable ligand of isoforms a and b of the calcitonin receptor-like protein, pdfr-1, a G-protein coupled receptor. May not signal through isoform c of pdfr-1. Involved in locomotion; may play a role in circadian rhythms of locomotor activity. Modulator of egg-laying. The polypeptide is Pigment dispersing factor homolog pdf-2 (Caenorhabditis elegans).